The chain runs to 60 residues: Large ribosomal subunit protein uL30 (60 aa).

It belongs to the universal ribosomal protein uL30 family. In terms of assembly, part of the 50S ribosomal subunit.

The polypeptide is Large ribosomal subunit protein uL30 (Burkholderia mallei (strain NCTC 10247)).